The chain runs to 255 residues: MWKDNRISEVFIKKKGIGMIALADIPANTLIMKELPISIVKINNQTVSDIFQILYDVLSDPNKKSLFEKFLPNSINEFESHRNNLMKEFHKLKKSRLNNVYQFINNNFTSDEILLYGAKYMCNAFEFNNGSAILINGAKFNHSCVPNVIFVSDENYMYFYTVRNIKTGEELTDNYVDIMSNTKTRKNRLFNQYGFDCQCERCIGSDKLFYQEVEKIQSSKFYFSNQISVNHRKKLQQNSKNLKKNPKKTIKATPK.

One can recognise an SET domain in the interval 5–176 (NRISEVFIKK…TGEELTDNYV (172 aa)). Residues 235–255 (LQQNSKNLKKNPKKTIKATPK) form a disordered region.

The protein belongs to the class V-like SAM-binding methyltransferase superfamily.

This chain is Putative SET domain-containing protein L678, found in Acanthamoeba polyphaga mimivirus (APMV).